A 446-amino-acid polypeptide reads, in one-letter code: MENILDLWNQALAQIEKKLSKPSFETWMKSTKAHSLQGDTLTITAPNEFARDWLESRYLHLIADTIYELTGEELSVKFVIPQNQDEENFLPKPQVKKAAKEEPSDFPQSMLNPKYTFDTFVIGSGNRFAHAASLAVAEAPAKAYNPLFIYGGVGLGKTHLMHAIGHYVIDHNPSAKVVYLSSEKFTNEFINSIRDNKAVDFRNRYRNVDVLLIDDIQFLAGKEQTQEEFFHTFNTLHEESKQIVISSDRPPKEIPTLEDRLRSRFEWGLITDITPPDLETRIAILRKKAKAEGLDIPNEVMLYIANQIDSNIRELEGALIRVVAYSSLINKDINADLAAEALKDIIPSSKPKVITIKEIQRIVGQQFNIKLEDFKAKKRTKSVAFPRQIAMYLSREMTDSSLPKIGEEFGGRDHTTVIHAHEKISKLLIDDEQLQQQVKEIKELLK.

Positions 1 to 72 are domain I, interacts with DnaA modulators; it reads MENILDLWNQ…ADTIYELTGE (72 aa). Positions 72–109 are domain II; that stretch reads EELSVKFVIPQNQDEENFLPKPQVKKAAKEEPSDFPQS. The interval 110–326 is domain III, AAA+ region; it reads MLNPKYTFDT…GALIRVVAYS (217 aa). Glycine 154, glycine 156, lysine 157, and threonine 158 together coordinate ATP. The segment at 327-446 is domain IV, binds dsDNA; that stretch reads SLINKDINAD…QVKEIKELLK (120 aa).

Belongs to the DnaA family. Oligomerizes as a right-handed, spiral filament on DNA at oriC.

Its subcellular location is the cytoplasm. Functionally, plays an essential role in the initiation and regulation of chromosomal replication. ATP-DnaA binds to the origin of replication (oriC) to initiate formation of the DNA replication initiation complex once per cell cycle. Binds the DnaA box (a 9 base pair repeat at the origin) and separates the double-stranded (ds)DNA. Forms a right-handed helical filament on oriC DNA; dsDNA binds to the exterior of the filament while single-stranded (ss)DNA is stabiized in the filament's interior. The ATP-DnaA-oriC complex binds and stabilizes one strand of the AT-rich DNA unwinding element (DUE), permitting loading of DNA polymerase. After initiation quickly degrades to an ADP-DnaA complex that is not apt for DNA replication. Binds acidic phospholipids. The protein is Chromosomal replication initiator protein DnaA of Bacillus velezensis (strain DSM 23117 / BGSC 10A6 / LMG 26770 / FZB42) (Bacillus amyloliquefaciens subsp. plantarum).